A 144-amino-acid polypeptide reads, in one-letter code: MSHKILLVNGPNLNLLGRREPSVYGHQTLADIVATLNQQAQQAGVELEHIQSNAEFELINAIHATDAQMIIINPAAFTHTSVALRDAMLGVAIPFFEVHLSNVHAREAFRHHSYFSDKAIGVICGFGAQGYEFALSAAIKQLKG.

Tyr24 functions as the Proton acceptor in the catalytic mechanism. Asn73, His79, and Asp86 together coordinate substrate. His99 acts as the Proton donor in catalysis. Residues 100–101 (LS) and Arg110 each bind substrate.

It belongs to the type-II 3-dehydroquinase family. In terms of assembly, homododecamer.

The catalysed reaction is 3-dehydroquinate = 3-dehydroshikimate + H2O. It functions in the pathway metabolic intermediate biosynthesis; chorismate biosynthesis; chorismate from D-erythrose 4-phosphate and phosphoenolpyruvate: step 3/7. In terms of biological role, catalyzes a trans-dehydration via an enolate intermediate. The polypeptide is 3-dehydroquinate dehydratase (Shewanella putrefaciens (strain CN-32 / ATCC BAA-453)).